Here is a 616-residue protein sequence, read N- to C-terminus: KIF-binding protein (616 aa).

Residues 52–78 (EEEEESEAEGKEERRDGPESGGRRGES) are disordered. Positions 59-78 (AEGKEERRDGPESGGRRGES) are enriched in basic and acidic residues.

It belongs to the KIF-binding protein family.

The protein localises to the cytoplasm. It is found in the cytoskeleton. Functionally, activator of KIF1B plus-end-directed microtubule motor activity. Required for organization of axonal microtubules, and axonal outgrowth and maintenance during peripheral and central nervous system development. The sequence is that of KIF-binding protein from Xenopus tropicalis (Western clawed frog).